We begin with the raw amino-acid sequence, 337 residues long: Anthranilate phosphoribosyltransferase (337 aa).

5-phospho-alpha-D-ribose 1-diphosphate-binding positions include G81, 84 to 85 (GD), S89, 91 to 94 (NVST), 109 to 117 (KHGNRAASS), and A121. Anthranilate is bound at residue G81. Residue S93 participates in Mg(2+) binding. N112 provides a ligand contact to anthranilate. R167 contacts anthranilate. Mg(2+)-binding residues include D226 and E227.

The protein belongs to the anthranilate phosphoribosyltransferase family. In terms of assembly, homodimer. Mg(2+) serves as cofactor.

It catalyses the reaction N-(5-phospho-beta-D-ribosyl)anthranilate + diphosphate = 5-phospho-alpha-D-ribose 1-diphosphate + anthranilate. Its pathway is amino-acid biosynthesis; L-tryptophan biosynthesis; L-tryptophan from chorismate: step 2/5. Catalyzes the transfer of the phosphoribosyl group of 5-phosphorylribose-1-pyrophosphate (PRPP) to anthranilate to yield N-(5'-phosphoribosyl)-anthranilate (PRA). The polypeptide is Anthranilate phosphoribosyltransferase (Methylobacterium sp. (strain 4-46)).